The following is a 139-amino-acid chain: Prefoldin subunit alpha (139 aa).

It belongs to the prefoldin subunit alpha family. As to quaternary structure, heterohexamer of two alpha and four beta subunits.

The protein localises to the cytoplasm. In terms of biological role, molecular chaperone capable of stabilizing a range of proteins. Seems to fulfill an ATP-independent, HSP70-like function in archaeal de novo protein folding. The polypeptide is Prefoldin subunit alpha (Picrophilus torridus (strain ATCC 700027 / DSM 9790 / JCM 10055 / NBRC 100828 / KAW 2/3)).